The chain runs to 105 residues: uncharacterized protein (105 aa).

The segment covering 1–11 has biased composition (basic residues); the sequence is MPHRNDRRKSA. A disordered region spans residues 1-20; sequence MPHRNDRRKSASKAPNAIIH.

Belongs to the ALB1 family.

It localises to the nucleus. The protein localises to the nucleolus. This is an uncharacterized protein from Schizosaccharomyces pombe (strain 972 / ATCC 24843) (Fission yeast).